The following is a 72-amino-acid chain: Translation initiation factor IF-1 (72 aa).

Positions 1–72 (MAKDDVIEID…DKGRITFRYK (72 aa)) constitute an S1-like domain.

Belongs to the IF-1 family. In terms of assembly, component of the 30S ribosomal translation pre-initiation complex which assembles on the 30S ribosome in the order IF-2 and IF-3, IF-1 and N-formylmethionyl-tRNA(fMet); mRNA recruitment can occur at any time during PIC assembly.

Its subcellular location is the cytoplasm. One of the essential components for the initiation of protein synthesis. Stabilizes the binding of IF-2 and IF-3 on the 30S subunit to which N-formylmethionyl-tRNA(fMet) subsequently binds. Helps modulate mRNA selection, yielding the 30S pre-initiation complex (PIC). Upon addition of the 50S ribosomal subunit IF-1, IF-2 and IF-3 are released leaving the mature 70S translation initiation complex. This chain is Translation initiation factor IF-1, found in Sulfurovum sp. (strain NBC37-1).